The primary structure comprises 31 residues: DTIPCGESCVWIPCISSILGCSCKDKVCYHN.

Positions 1–31 form a cross-link, cyclopeptide (Asp-Asn); sequence DTIPCGESCVWIPCISSILGCSCKDKVCYHN. Disulfide bonds link cysteine 5–cysteine 21, cysteine 9–cysteine 23, and cysteine 14–cysteine 28.

Post-translationally, contains 3 disulfide bonds. This is a cyclic peptide. As to expression, expressed in seed but not in root nodules.

Probably participates in a plant defense mechanism. Not active against Gram-negative bacterium E.coli ATCC 700926 or Gram-positive bacterium S.aureus ATCC 12600 up to a concentration of 100 uM under low-salt conditions. The sequence is that of Cliotide T14 from Clitoria ternatea (Butterfly pea).